The sequence spans 207 residues: Ras-related protein Rab-8B (207 aa).

GTP is bound by residues serine 17, glycine 18, valine 19, glycine 20, lysine 21, threonine 22, cysteine 23, threonine 35, serine 39, and threonine 40. Mg(2+) is bound at residue threonine 22. 2 short sequence motifs (switch) span residues 31–45 (DAFNTTFISTIGIDF) and 63–80 (DTAGQERFRTITTAYYRG). Mg(2+) is bound by residues threonine 40 and aspartate 63. Glycine 66 is a GTP binding site. Threonine 72 is modified (phosphothreonine; by LRRK2). GTP contacts are provided by asparagine 121, lysine 122, aspartate 124, alanine 152, and lysine 153. Phosphoserine is present on serine 180. Cysteine 204 is subject to Cysteine methyl ester. Residue cysteine 204 is the site of S-geranylgeranyl cysteine attachment. Positions 205 to 207 (SLL) are cleaved as a propeptide — removed in mature form.

Belongs to the small GTPase superfamily. Rab family. In terms of assembly, associated with actin, delta-catenin and alpha and beta tubulins. Interacts with OTOF. Interacts with PEX5R. Interacts with RAB3IP. Interacts with VIM. Interacts with CDH1. Interacts with MICALL2. Interacts with GDI1, GDI2, CHML and CHM; phosphorylation at Thr-72 disrupts these interactions. Interacts with MICAL1. Requires Mg(2+) as cofactor. Post-translationally, phosphorylation of Thr-72 in the switch II region by LRRK2 prevents the association of RAB regulatory proteins, including CHM, CHML and RAB GDP dissociation inhibitors GDI1 and GDI2.

Its subcellular location is the cell membrane. It localises to the cytoplasmic vesicle. The protein resides in the phagosome. The protein localises to the phagosome membrane. It is found in the endosome membrane. It carries out the reaction GTP + H2O = GDP + phosphate + H(+). Its activity is regulated as follows. Regulated by guanine nucleotide exchange factors (GEFs) including RAB3IP/RABIN8 which promotes the exchange of bound GDP for free GTP. Regulated by GTPase activating proteins (GAPs) which increase the GTP hydrolysis activity. Inhibited by GDP dissociation inhibitors (GDIs). Functionally, the small GTPases Rab are key regulators of intracellular membrane trafficking, from the formation of transport vesicles to their fusion with membranes. Rabs cycle between an inactive GDP-bound form and an active GTP-bound form that is able to recruit to membranes different sets of downstream effectors directly responsible for vesicle formation, movement, tethering and fusion. RAB8B may be involved in polarized vesicular trafficking and neurotransmitter release. May participate in cell junction dynamics in Sertoli cells. May also participate in the export of a subset of neosynthesized proteins through a Rab8-Rab10-Rab11-dependent endososomal export route. The polypeptide is Ras-related protein Rab-8B (Homo sapiens (Human)).